Reading from the N-terminus, the 310-residue chain is L-lactate dehydrogenase (310 aa).

NAD(+)-binding positions include 10-11 (MV), Asp-32, Tyr-62, and 76-77 (GV). Substrate contacts are provided by residues Gln-79, Arg-85, and 117–120 (NPVD). NAD(+) contacts are provided by residues 115 to 117 (ATN) and Ser-140. 145-148 (DTAR) is a binding site for substrate. Beta-D-fructose 1,6-bisphosphate is bound by residues Arg-150 and His-165. The Proton acceptor role is filled by His-172. Tyr-218 carries the post-translational modification Phosphotyrosine. Residue Thr-227 participates in substrate binding.

It belongs to the LDH/MDH superfamily. LDH family. In terms of assembly, homotetramer.

It is found in the cytoplasm. It catalyses the reaction (S)-lactate + NAD(+) = pyruvate + NADH + H(+). The protein operates within fermentation; pyruvate fermentation to lactate; (S)-lactate from pyruvate: step 1/1. Its activity is regulated as follows. Allosterically activated by fructose 1,6-bisphosphate (FBP). In terms of biological role, catalyzes the conversion of lactate to pyruvate. In Thermus thermophilus (strain ATCC 27634 / DSM 579 / HB8), this protein is L-lactate dehydrogenase.